Here is a 1241-residue protein sequence, read N- to C-terminus: Plasma membrane calcium-transporting ATPase 4 (1241 aa).

The Cytoplasmic portion of the chain corresponds to 1–92 (MTNPSDRVLP…NVIPPKKPKT (92 aa)). A Phosphoserine modification is found at S13. The chain crosses the membrane as a helical span at residues 93 to 113 (FLELVWEALQDVTLIILEIAA). The Extracellular segment spans residues 114-150 (IISLVLSFYRPAGEENELCGQVATTPEDENEAQAGWI). A helical transmembrane segment spans residues 151–171 (EGAAILFSVIIVVLVTAFNDW). At 172 to 356 (SKEKQFRGLQ…KEKSVLQGKL (185 aa)) the chain is on the cytoplasmic side. Residues 294-318 (EGEKKKKGKKQGVPENRNKAKTQDG) are disordered. A Phosphoserine modification is found at S328. The chain crosses the membrane as a helical span at residues 357–376 (TRLAVQIGKAGLLMSALTVF). Residues 377-409 (ILILYFVIDNFVINRRPWLPECTPIYIQYFVKF) lie on the Extracellular side of the membrane. A helical transmembrane segment spans residues 410–427 (FIIGITVLVVAVPEGLPL). At 428 to 840 (AVTISLAYSV…MWGRNVYDSI (413 aa)) the chain is on the cytoplasmic side. D465 serves as the catalytic 4-aspartylphosphate intermediate. D785 and D789 together coordinate Mg(2+). Residues 841-860 (SKFLQFQLTVNVVAVIVAFT) traverse the membrane as a helical segment. The Extracellular portion of the chain corresponds to 861–870 (GACITQDSPL). A helical membrane pass occupies residues 871-891 (KAVQMLWVNLIMDTFASLALA). The Cytoplasmic portion of the chain corresponds to 892–911 (TEPPTESLLKRRPYGRNKPL). The helical transmembrane segment at 912 to 934 (ISRTMMKNILGHAFYQLIVIFIL) threads the bilayer. The Extracellular segment spans residues 935 to 952 (VFAGEKFFDIDSGRKAPL). A helical transmembrane segment spans residues 953-974 (HSPPSQHYTIVFNTFVLMQLFN). The Cytoplasmic segment spans residues 975-993 (EINSRKIHGEKNVFSGIYR). A helical transmembrane segment spans residues 994–1015 (NIIFCSVVLGTFICQIFIVEFG). Topologically, residues 1016 to 1025 (GKPFSCTSLS) are extracellular. Residues 1026–1047 (LSQWLWCLFIGIGELLWGQFIS) traverse the membrane as a helical segment. Over 1048–1241 (AIPTRSLKFL…SSLQSLETSV (194 aa)) the chain is Cytoplasmic. The segment at 1086 to 1103 (LRRGQILWFRGLNRIQTQ) is calmodulin-binding subdomain A. At T1102 the chain carries Phosphothreonine; by PKC. The tract at residues 1104–1113 (IDVINTFQTG) is calmodulin-binding subdomain B.

Belongs to the cation transport ATPase (P-type) (TC 3.A.3) family. Type IIB subfamily. Interacts with PDZD11. Interacts with SLC35G1 and STIM1. Interacts with calmodulin. Isoform XB is the most abundant isoform and is expressed ubiquitously. Isoforms containing segment Z have only been detected in heart, while isoforms containing segment a have been found in heart, stomach and brain cortex.

It localises to the cell membrane. Its subcellular location is the cell projection. It is found in the cilium. The protein resides in the flagellum membrane. The catalysed reaction is Ca(2+)(in) + ATP + H2O = Ca(2+)(out) + ADP + phosphate + H(+). With respect to regulation, activated by calcium/calmodulin. In terms of biological role, calcium/calmodulin-regulated and magnesium-dependent enzyme that catalyzes the hydrolysis of ATP coupled with the transport of calcium out of the cell. By regulating sperm cell calcium homeostasis, may play a role in sperm motility. This chain is Plasma membrane calcium-transporting ATPase 4, found in Homo sapiens (Human).